The chain runs to 177 residues: Thymidine kinase (177 aa).

Residue 11-18 (GPMFSGKS) participates in ATP binding. Glu83 functions as the Proton acceptor in the catalytic mechanism. Residue Phe113 coordinates substrate. Positions 138 and 141 each coordinate Zn(2+). Substrate is bound at residue 157–161 (IEIIG). Cys170 and Cys173 together coordinate Zn(2+).

Belongs to the thymidine kinase family. Homotetramer. Two molecules of substrate bind to each enzyme tetramer.

It carries out the reaction thymidine + ATP = dTMP + ADP + H(+). In terms of biological role, phosphorylates thymidine and thymidine analogs, such as azidothymidine (AZT). Part of the salvage pathway for pyrimidine deoxyribonucleotide synthesis. This Variola virus (isolate Human/India/Ind3/1967) (VARV) protein is Thymidine kinase (OPG101).